A 251-amino-acid chain; its full sequence is Chorismate mutase (251 aa).

The 251-residue stretch at 1 to 251 (MSLVNEKLKL…EVDYLLARLL (251 aa)) folds into the Chorismate mutase domain. L-tyrosine-binding residues include arginine 74, arginine 75, asparagine 134, glycine 136, and serine 137. L-tryptophan is bound by residues asparagine 134, glycine 136, and serine 137.

In terms of assembly, homodimer.

The protein localises to the cytoplasm. The enzyme catalyses chorismate = prephenate. The protein operates within metabolic intermediate biosynthesis; prephenate biosynthesis; prephenate from chorismate: step 1/1. With respect to regulation, each dimer has two allosteric binding sites that can bind the regulatory effectors tryptophan or tyrosine. Can bind either one tryptophan or one tyrosine, two tryptophan or two tyrosine or one tryptophan and one tyrosine, which differentially affect the catalytic activity. Activated by tryptophan and subject to feedback inhibition by tyrosine. In the presence of both tryptophan and tyrosine, the enzyme is in the activated state. Its function is as follows. Catalyzes the Claisen rearrangement of chorismate to prephenate. Acts at the first branch point in the aromatic amino acid pathway where it steers biosynthesis towards phenylalanine and tyrosine, and away from tryptophan. This chain is Chorismate mutase, found in Schizosaccharomyces pombe (strain 972 / ATCC 24843) (Fission yeast).